Reading from the N-terminus, the 466-residue chain is Chromosomal replication initiator protein DnaA (466 aa).

Residues 1 to 77 (MSQEIWADVL…GAEHPQVEFQ (77 aa)) are domain I, interacts with DnaA modulators. Residues 77-121 (QVLPAAQDALLLPNDPPPAPEAAAPTPKTKAAPTPPPSTPGDNRK) are domain II. Residues 87–122 (LLPNDPPPAPEAAAPTPKTKAAPTPPPSTPGDNRKT) form a disordered region. Low complexity predominate over residues 97-108 (EAAAPTPKTKAA). Residues 122–338 (TLNPKYTFEN…GALMRVVAFA (217 aa)) form a domain III, AAA+ region region. Residues glycine 166, glycine 168, lysine 169, and threonine 170 each contribute to the ATP site. A domain IV, binds dsDNA region spans residues 339–466 (SLNNVPFSRA…GKEEEEEVGA (128 aa)).

The protein belongs to the DnaA family. Oligomerizes as a right-handed, spiral filament on DNA at oriC.

The protein resides in the cytoplasm. Plays an essential role in the initiation and regulation of chromosomal replication. ATP-DnaA binds to the origin of replication (oriC) to initiate formation of the DNA replication initiation complex once per cell cycle. Binds the DnaA box (a 9 base pair repeat at the origin) and separates the double-stranded (ds)DNA. Forms a right-handed helical filament on oriC DNA; dsDNA binds to the exterior of the filament while single-stranded (ss)DNA is stabiized in the filament's interior. The ATP-DnaA-oriC complex binds and stabilizes one strand of the AT-rich DNA unwinding element (DUE), permitting loading of DNA polymerase. After initiation quickly degrades to an ADP-DnaA complex that is not apt for DNA replication. Binds acidic phospholipids. In terms of biological role, strand separation requires the DnaA boxes and adjacent DnaA-trio motifs but works equally well with ADP or ATP. This Deinococcus radiodurans (strain ATCC 13939 / DSM 20539 / JCM 16871 / CCUG 27074 / LMG 4051 / NBRC 15346 / NCIMB 9279 / VKM B-1422 / R1) protein is Chromosomal replication initiator protein DnaA.